The primary structure comprises 27 residues: Potassium channel toxin alpha-KTx 32.1 (27 aa).

2 disulfides stabilise this stretch: cysteine 5–cysteine 18 and cysteine 12–cysteine 25.

In terms of tissue distribution, expressed by the venom gland.

It is found in the secreted. In terms of biological role, blocker of voltage-gated potassium channels. Inhibits voltage-gated potassium channels Kv1.2/KCNA2 (Kd=0.96 nM) and Kv1.3/KCNA3 (Kd=1.3 nM). Does not inhibit Kv1.1/KCNA1, Kv1.5/KCNA5, Kv11.1/KCNH2/ERG1, KCa1.1/KCNMA1, KCa3.1/KCNN4, NaV1.5/SCN5A, NaV1.4/SCN4A or HV1/HVCN1. Strongly inhibits the expression of the activation markers interleukin-2 receptor and CD40 ligand/CD40LG in anti-CD3-activated CD4(+) TEM lymphocytes. This Centruroides margaritatus (Central American bark Scorpion) protein is Potassium channel toxin alpha-KTx 32.1.